Consider the following 567-residue polypeptide: DNA ligase (567 aa).

Glu-260 contacts ATP. The N6-AMP-lysine intermediate role is filled by Lys-262. The ATP site is built by Arg-267, Arg-282, Glu-312, Phe-352, Arg-427, and Lys-433.

It belongs to the ATP-dependent DNA ligase family. The cofactor is Mg(2+).

It carries out the reaction ATP + (deoxyribonucleotide)n-3'-hydroxyl + 5'-phospho-(deoxyribonucleotide)m = (deoxyribonucleotide)n+m + AMP + diphosphate.. DNA ligase that seals nicks in double-stranded DNA during DNA replication, DNA recombination and DNA repair. The sequence is that of DNA ligase from Methanococcoides burtonii (strain DSM 6242 / NBRC 107633 / OCM 468 / ACE-M).